The chain runs to 372 residues: Alpha-parvin (372 aa).

Residues 1-31 (MATSPQKSPLVPKSPTPKSPPSRKKDDSFLG) are disordered. Alanine 2 carries the N-acetylalanine modification. 3 positions are modified to phosphoserine: serine 8, serine 14, and serine 19. Residues 21–25 (PSRKK) are interaction with ARHGAP31. Serine 28 and serine 62 each carry phosphoserine. Calponin-homology (CH) domains follow at residues 95 to 202 (QELM…QYFR) and 262 to 369 (NVVK…TKYR). The interval 223-372 (GILQSRQIQE…NLFTKYRNVE (150 aa)) is required for interaction with TESK1 and ILK.

This sequence belongs to the parvin family. In terms of assembly, component of the heterotrimeric IPP (ILK-PINCH-PARVIN) complex composed of ILK, LIMS1/PINCH and PARVA; the complex binds to F-actin via the C-terminal tail of LIMS1 and the N-terminal region of PARVA, promoting F-actin filament bundling. Interacts with TGFB1I1. Interacts with ARHGAP31. Interacts with the actin cytoskeleton. Interacts (via C-terminus) with TESK1 (via C-terminus); the interaction inhibits TESK1 kinase activity. Interacts with PXN/PAXILLIN (via LD motif 4).

It is found in the cell junction. The protein localises to the focal adhesion. It localises to the cell membrane. The protein resides in the cytoplasm. Its subcellular location is the cytoskeleton. It is found in the myofibril. The protein localises to the sarcomere. It localises to the z line. In terms of biological role, plays a role in sarcomere organization and in smooth muscle cell contraction. Required for normal development of the embryonic cardiovascular system, and for normal septation of the heart outflow tract. Plays a role in sprouting angiogenesis and is required for normal adhesion of vascular smooth muscle cells to endothelial cells during blood vessel development. Plays a role in the reorganization of the actin cytoskeleton, formation of lamellipodia and ciliogenesis. Plays a role in the establishment of cell polarity, cell adhesion, cell spreading, and directed cell migration. Within the IPP (ILK-PINCH-PARVIN) complex, binds to F-actin, promoting F-actin bundling, a process required to generate force for actin cytoskeleton reorganization and subsequent dynamic cell adhesion events such as cell spreading and migration. The protein is Alpha-parvin (Parva) of Mus musculus (Mouse).